A 475-amino-acid chain; its full sequence is UDP-N-acetylmuramate--L-alanine ligase (475 aa).

ATP is bound at residue 125–131 (GTHGKTT).

This sequence belongs to the MurCDEF family.

Its subcellular location is the cytoplasm. It carries out the reaction UDP-N-acetyl-alpha-D-muramate + L-alanine + ATP = UDP-N-acetyl-alpha-D-muramoyl-L-alanine + ADP + phosphate + H(+). Its pathway is cell wall biogenesis; peptidoglycan biosynthesis. Cell wall formation. The chain is UDP-N-acetylmuramate--L-alanine ligase from Haemophilus influenzae (strain 86-028NP).